The primary structure comprises 476 residues: Aspartyl/glutamyl-tRNA(Asn/Gln) amidotransferase subunit B (476 aa).

Belongs to the GatB/GatE family. GatB subfamily. Heterotrimer of A, B and C subunits.

It catalyses the reaction L-glutamyl-tRNA(Gln) + L-glutamine + ATP + H2O = L-glutaminyl-tRNA(Gln) + L-glutamate + ADP + phosphate + H(+). The enzyme catalyses L-aspartyl-tRNA(Asn) + L-glutamine + ATP + H2O = L-asparaginyl-tRNA(Asn) + L-glutamate + ADP + phosphate + 2 H(+). Functionally, allows the formation of correctly charged Asn-tRNA(Asn) or Gln-tRNA(Gln) through the transamidation of misacylated Asp-tRNA(Asn) or Glu-tRNA(Gln) in organisms which lack either or both of asparaginyl-tRNA or glutaminyl-tRNA synthetases. The reaction takes place in the presence of glutamine and ATP through an activated phospho-Asp-tRNA(Asn) or phospho-Glu-tRNA(Gln). The sequence is that of Aspartyl/glutamyl-tRNA(Asn/Gln) amidotransferase subunit B from Enterococcus faecalis (strain ATCC 700802 / V583).